The following is a 349-amino-acid chain: Probable trehalose-phosphate phosphatase H (349 aa).

This sequence belongs to the trehalose phosphatase family. A divalent metal cation serves as cofactor.

It catalyses the reaction alpha,alpha-trehalose 6-phosphate + H2O = alpha,alpha-trehalose + phosphate. It participates in glycan biosynthesis; trehalose biosynthesis. In terms of biological role, removes the phosphate from trehalose 6-phosphate to produce free trehalose. Trehalose accumulation in plant may improve abiotic stress tolerance. In Arabidopsis thaliana (Mouse-ear cress), this protein is Probable trehalose-phosphate phosphatase H (TPPH).